A 228-amino-acid polypeptide reads, in one-letter code: Glutamate transport system permease protein GluC (228 aa).

5 consecutive transmembrane segments (helical) span residues 16–36 (FWVTIKLTIYSAIGAMIFGTI), 64–84 (LTLVVLFCSFGLYQNLGLTLA), 100–120 (AVLGFILYTSTFVAESLRSGI), 145–165 (IIFPQAVRAAIVPLGNTLIAL), and 195–215 (LFVVFAIFAVGFMILTLPMGL). One can recognise an ABC transmembrane type-1 domain in the interval 16-217 (FWVTIKLTIY…ILTLPMGLGL (202 aa)).

It belongs to the binding-protein-dependent transport system permease family. HisMQ subfamily. In terms of assembly, the complex is composed of two ATP-binding proteins (GluA), two transmembrane proteins (GluC and GluD) and a solute-binding protein (GluB).

The protein resides in the cell membrane. Functionally, part of the ABC transporter complex GluABCD involved in glutamate uptake. Probably responsible for the translocation of the substrate across the membrane. This is Glutamate transport system permease protein GluC from Corynebacterium glutamicum (strain ATCC 13032 / DSM 20300 / JCM 1318 / BCRC 11384 / CCUG 27702 / LMG 3730 / NBRC 12168 / NCIMB 10025 / NRRL B-2784 / 534).